The chain runs to 329 residues: GMP reductase (329 aa).

Cys-178 serves as the catalytic Thioimidate intermediate. 207 to 230 provides a ligand contact to NADP(+); sequence VIADGGIRTHGDVAKSIRMGATMV.

Belongs to the IMPDH/GMPR family. GuaC type 2 subfamily.

The catalysed reaction is IMP + NH4(+) + NADP(+) = GMP + NADPH + 2 H(+). In terms of biological role, catalyzes the irreversible NADPH-dependent deamination of GMP to IMP. It functions in the conversion of nucleobase, nucleoside and nucleotide derivatives of G to A nucleotides, and in maintaining the intracellular balance of A and G nucleotides. The chain is GMP reductase from Lactococcus lactis subsp. cremoris (strain MG1363).